The primary structure comprises 510 residues: Coatomer subunit delta (510 aa).

The 241-residue stretch at Met270–Leu510 folds into the MHD domain.

The protein belongs to the adaptor complexes medium subunit family. Delta-COP subfamily. In terms of assembly, oligomeric complex that consists of at least the alpha, beta, beta', gamma, delta, epsilon and zeta subunits.

It is found in the cytoplasm. The protein resides in the golgi apparatus membrane. It localises to the cytoplasmic vesicle. The protein localises to the COPI-coated vesicle membrane. Functionally, the coatomer is a cytosolic protein complex that binds to dilysine motifs and reversibly associates with Golgi non-clathrin-coated vesicles, which further mediate biosynthetic protein transport from the ER, via the Golgi up to the trans Golgi network. Coatomer complex is required for budding from Golgi membranes, and is essential for the retrograde Golgi-to-ER transport of dilysine-tagged proteins. In mammals, the coatomer can only be recruited by membranes associated to ADP-ribosylation factors (ARFs), which are small GTP-binding proteins; the complex also influences the Golgi structural integrity, as well as the processing, activity, and endocytic recycling of LDL receptors. The protein is Coatomer subunit delta (ARCN1) of Gallus gallus (Chicken).